We begin with the raw amino-acid sequence, 467 residues long: ATP synthase subunit beta (467 aa).

150-157 (GGAGVGKT) lines the ATP pocket.

This sequence belongs to the ATPase alpha/beta chains family. In terms of assembly, F-type ATPases have 2 components, CF(1) - the catalytic core - and CF(0) - the membrane proton channel. CF(1) has five subunits: alpha(3), beta(3), gamma(1), delta(1), epsilon(1). CF(0) has three main subunits: a(1), b(2) and c(9-12). The alpha and beta chains form an alternating ring which encloses part of the gamma chain. CF(1) is attached to CF(0) by a central stalk formed by the gamma and epsilon chains, while a peripheral stalk is formed by the delta and b chains.

The protein resides in the cell inner membrane. It catalyses the reaction ATP + H2O + 4 H(+)(in) = ADP + phosphate + 5 H(+)(out). In terms of biological role, produces ATP from ADP in the presence of a proton gradient across the membrane. The catalytic sites are hosted primarily by the beta subunits. The protein is ATP synthase subunit beta of Vibrio parahaemolyticus serotype O3:K6 (strain RIMD 2210633).